Consider the following 120-residue polypeptide: Large ribosomal subunit protein eL8 (120 aa).

The protein belongs to the eukaryotic ribosomal protein eL8 family. As to quaternary structure, part of the 50S ribosomal subunit. Probably part of the RNase P complex.

The protein localises to the cytoplasm. Multifunctional RNA-binding protein that recognizes the K-turn motif in ribosomal RNA, the RNA component of RNase P, box H/ACA, box C/D and box C'/D' sRNAs. The sequence is that of Large ribosomal subunit protein eL8 from Halorubrum lacusprofundi (strain ATCC 49239 / DSM 5036 / JCM 8891 / ACAM 34).